A 298-amino-acid chain; its full sequence is Bifunctional protein FolD (298 aa).

NADP(+) is bound by residues 167–169, S192, and I233; that span reads GRS.

It belongs to the tetrahydrofolate dehydrogenase/cyclohydrolase family. Homodimer.

It catalyses the reaction (6R)-5,10-methylene-5,6,7,8-tetrahydrofolate + NADP(+) = (6R)-5,10-methenyltetrahydrofolate + NADPH. The enzyme catalyses (6R)-5,10-methenyltetrahydrofolate + H2O = (6R)-10-formyltetrahydrofolate + H(+). The protein operates within one-carbon metabolism; tetrahydrofolate interconversion. Functionally, catalyzes the oxidation of 5,10-methylenetetrahydrofolate to 5,10-methenyltetrahydrofolate and then the hydrolysis of 5,10-methenyltetrahydrofolate to 10-formyltetrahydrofolate. This chain is Bifunctional protein FolD, found in Caulobacter sp. (strain K31).